We begin with the raw amino-acid sequence, 63 residues long: MISRFCLLFLLVFVVSKIQAVEDFNEENEVDDLDDLDFLDDLDLDLSPEELEYLENWAKEFED.

Residues Met1–Ala20 form the signal peptide.

The protein belongs to the non-disulfide-bridged peptide (NDBP) superfamily. Long chain multifunctional peptide (group 2) family. In terms of tissue distribution, expressed by the venom gland.

The protein resides in the secreted. The protein is Anionic peptide 10.1 of Lychas mucronatus (Chinese swimming scorpion).